Reading from the N-terminus, the 30-residue chain is Cytochrome c3, 50 kDa (30 aa).

Monomer. Binds 4 heme groups per subunit.

It is found in the periplasm. Its function is as follows. Participates in sulfate respiration coupled with phosphorylation by transferring electrons from the enzyme dehydrogenase to ferredoxin. This chain is Cytochrome c3, 50 kDa, found in Desulfuromonas acetoxidans (Chloropseudomonas ethylica).